The sequence spans 382 residues: Alanine racemase (382 aa).

Lys39 serves as the catalytic Proton acceptor; specific for D-alanine. Lys39 carries the post-translational modification N6-(pyridoxal phosphate)lysine. Residue Arg138 participates in substrate binding. The active-site Proton acceptor; specific for L-alanine is Tyr265. Met312 serves as a coordination point for substrate.

The protein belongs to the alanine racemase family. Pyridoxal 5'-phosphate is required as a cofactor.

The enzyme catalyses L-alanine = D-alanine. The protein operates within amino-acid biosynthesis; D-alanine biosynthesis; D-alanine from L-alanine: step 1/1. Functionally, catalyzes the interconversion of L-alanine and D-alanine. May also act on other amino acids. This Staphylococcus saprophyticus subsp. saprophyticus (strain ATCC 15305 / DSM 20229 / NCIMB 8711 / NCTC 7292 / S-41) protein is Alanine racemase (alr).